The chain runs to 78 residues: Conotoxin Cl14.9 (78 aa).

The first 22 residues, 1–22 (MTAKATLLVLALVVMATSGVSS), serve as a signal peptide directing secretion. Positions 23–47 (ASVAGGPVVNSDTVSRSDPERLSTR) are excised as a propeptide. Ile-70 is subject to Isoleucine amide. A propeptide spanning residues 74-78 (DITQQ) is cleaved from the precursor.

Contains 2 disulfide bonds. In terms of tissue distribution, expressed by the venom duct.

It localises to the secreted. The protein is Conotoxin Cl14.9 of Californiconus californicus (California cone).